Reading from the N-terminus, the 357-residue chain is Phosphoserine aminotransferase (357 aa).

An L-glutamate-binding site is contributed by Arg-41. Pyridoxal 5'-phosphate contacts are provided by residues 75–76, Trp-100, Thr-150, Asp-170, and Gln-193; that span reads GT. N6-(pyridoxal phosphate)lysine is present on Lys-194. 234 to 235 serves as a coordination point for pyridoxal 5'-phosphate; the sequence is NT.

The protein belongs to the class-V pyridoxal-phosphate-dependent aminotransferase family. SerC subfamily. In terms of assembly, homodimer. It depends on pyridoxal 5'-phosphate as a cofactor.

The protein localises to the cytoplasm. The enzyme catalyses O-phospho-L-serine + 2-oxoglutarate = 3-phosphooxypyruvate + L-glutamate. It carries out the reaction 4-(phosphooxy)-L-threonine + 2-oxoglutarate = (R)-3-hydroxy-2-oxo-4-phosphooxybutanoate + L-glutamate. It functions in the pathway amino-acid biosynthesis; L-serine biosynthesis; L-serine from 3-phospho-D-glycerate: step 2/3. Functionally, catalyzes the reversible conversion of 3-phosphohydroxypyruvate to phosphoserine and of 3-hydroxy-2-oxo-4-phosphonooxybutanoate to phosphohydroxythreonine. The protein is Phosphoserine aminotransferase of Lactiplantibacillus plantarum (strain ATCC BAA-793 / NCIMB 8826 / WCFS1) (Lactobacillus plantarum).